Reading from the N-terminus, the 314-residue chain is 4-hydroxyproline 2-epimerase (314 aa).

The active-site Proton acceptor is Cys-88. Substrate is bound by residues 89-90 (GH), His-208, and Asp-232. Cys-236 functions as the Proton donor in the catalytic mechanism. Residue 237 to 238 (GT) participates in substrate binding.

This sequence belongs to the proline racemase family. As to quaternary structure, homodimer.

The enzyme catalyses trans-4-hydroxy-L-proline = cis-4-hydroxy-D-proline. Its activity is regulated as follows. Inhibited by iodoacetate, iodoacetamide and by high amounts (10 mM) of pyrrole-2-carboxylate (PYC). Not inhibited by PYC at 1 mM. Allows intracellular utilization of 4-hydroxyproline, one of the major constituents of host collagen, by converting trans-4-hydroxy-L-proline (t4LHyp) to cis-4-hydroxy-D-proline (c4DHyp), which can be further metabolized by intracellular 4-hydroxy-D-proline oxidases. Strong B-cell mitogen. Plays an important role in the regulation of intra- and extracellular amino acid pools, allowing the bacterium to profit from host precursors and enzymatic pathways. Cannot use L-proline, trans-3-hydroxy-L-proline (t3LHyp) and pyrrolidone-5-carboxylate (P5C) as substrate. This chain is 4-hydroxyproline 2-epimerase, found in Pseudomonas aeruginosa (strain ATCC 15692 / DSM 22644 / CIP 104116 / JCM 14847 / LMG 12228 / 1C / PRS 101 / PAO1).